The sequence spans 306 residues: tRNA pseudouridine synthase B (306 aa).

Catalysis depends on Asp-43, which acts as the Nucleophile.

Belongs to the pseudouridine synthase TruB family. Type 1 subfamily.

The enzyme catalyses uridine(55) in tRNA = pseudouridine(55) in tRNA. In terms of biological role, responsible for synthesis of pseudouridine from uracil-55 in the psi GC loop of transfer RNAs. This Syntrophobacter fumaroxidans (strain DSM 10017 / MPOB) protein is tRNA pseudouridine synthase B.